Consider the following 226-residue polypeptide: PKHD-type hydroxylase mma_3620 (226 aa).

The Fe2OG dioxygenase domain occupies 78–178 (RYMPPLFNRY…RVCSFFWLQS (101 aa)). Fe cation-binding residues include His-96, Asp-98, and His-159. Arg-169 lines the 2-oxoglutarate pocket.

Requires Fe(2+) as cofactor. It depends on L-ascorbate as a cofactor.

The protein is PKHD-type hydroxylase mma_3620 of Janthinobacterium sp. (strain Marseille) (Minibacterium massiliensis).